The primary structure comprises 360 residues: DNA replication and repair protein RecF (360 aa).

30–37 provides a ligand contact to ATP; that stretch reads GHNGSGKT.

The protein belongs to the RecF family.

Its subcellular location is the cytoplasm. In terms of biological role, the RecF protein is involved in DNA metabolism; it is required for DNA replication and normal SOS inducibility. RecF binds preferentially to single-stranded, linear DNA. It also seems to bind ATP. The chain is DNA replication and repair protein RecF from Shewanella amazonensis (strain ATCC BAA-1098 / SB2B).